The sequence spans 105 residues: Transmembrane protein 273 (105 aa).

A signal peptide spans 1-19; that stretch reads MNLGVSMLRILFLLDVGGA. The Extracellular segment spans residues 20-38; the sequence is QVLATGKTPGAEIDFKYAL. A helical transmembrane segment spans residues 39 to 59; the sequence is IGTAVGVAISAGFLALKICMI. The Cytoplasmic segment spans residues 60-105; sequence RRHLFDDDSSDLKSTPGGLSDTIPLKKRAPRRNHNFSKRDAQVIEL.

It localises to the membrane. This Homo sapiens (Human) protein is Transmembrane protein 273.